A 201-amino-acid chain; its full sequence is Holliday junction branch migration complex subunit RuvA (201 aa).

The segment at 1–64 (MYEYIRGQFQ…EDFIGLYGFT (64 aa)) is domain I. Residues 65 to 143 (TREELEMFKL…PDELTSEEGQ (79 aa)) form a domain II region. The flexible linker stretch occupies residues 144–152 (LIEGINDNS). Residues 153–201 (DYSFNINETLSALMALGYTEKEAQKALEKVDKTLSIENMIKESLKLLMR) form a domain III region.

This sequence belongs to the RuvA family. Homotetramer. Forms an RuvA(8)-RuvB(12)-Holliday junction (HJ) complex. HJ DNA is sandwiched between 2 RuvA tetramers; dsDNA enters through RuvA and exits via RuvB. An RuvB hexamer assembles on each DNA strand where it exits the tetramer. Each RuvB hexamer is contacted by two RuvA subunits (via domain III) on 2 adjacent RuvB subunits; this complex drives branch migration. In the full resolvosome a probable DNA-RuvA(4)-RuvB(12)-RuvC(2) complex forms which resolves the HJ.

Its subcellular location is the cytoplasm. The RuvA-RuvB-RuvC complex processes Holliday junction (HJ) DNA during genetic recombination and DNA repair, while the RuvA-RuvB complex plays an important role in the rescue of blocked DNA replication forks via replication fork reversal (RFR). RuvA specifically binds to HJ cruciform DNA, conferring on it an open structure. The RuvB hexamer acts as an ATP-dependent pump, pulling dsDNA into and through the RuvAB complex. HJ branch migration allows RuvC to scan DNA until it finds its consensus sequence, where it cleaves and resolves the cruciform DNA. This Clostridium perfringens (strain 13 / Type A) protein is Holliday junction branch migration complex subunit RuvA.